The sequence spans 356 residues: MTSVTRSEIIDEKGPVMSKTHDHQLESSLSPVEVFAKTSASLEMNQGVSEERIHLGSSPKKGGNCDLSHQERLQSKSLHLSPQEQSASYQDRRQSWRRASMKETNRRKSLHPIHQGITELSRSISVDLAESKRLGCLLLSSFQFSIQKLEPFLRDTKGFSLESFRAKASSLSEELKHFADGLETDGTLQKCFEDSNGKASDFSLEASVAEMKEYITKFSLERQTWDQLLLHYQQEAKEILSRGSTEAKITEVKVEPMTYLGSSQNEVLNTKPDYQKILQNQSKVFDCMELVMDELQGSVKQLQAFMDESTQCFQKVSVQLGKRSMQQLDPSPARKLLKLQLQNPPAIHGSGSGSCQ.

The interval Met-1–Ser-28 is disordered. Positions Glu-8 to Leu-25 are enriched in basic and acidic residues. 7 positions are modified to phosphoserine: Ser-28, Ser-30, Ser-58, Ser-77, Ser-81, Ser-109, and Ser-125. The disordered stretch occupies residues Leu-73–Arg-93. Residues Ser-75–Tyr-89 are compositionally biased toward polar residues. Lys-253 participates in a covalent cross-link: Glycyl lysine isopeptide (Lys-Gly) (interchain with G-Cter in SUMO2). Ser-331 bears the Phosphoserine mark.

In terms of assembly, component of the MIS12 complex composed of MIS12, DSN1, NSL1 and PMF1. Also interacts with KNL1, CBX3 and CBX5. Interacts with KNSTRN.

The protein localises to the nucleus. It is found in the chromosome. It localises to the centromere. Its subcellular location is the kinetochore. Its function is as follows. Part of the MIS12 complex which is required for normal chromosome alignment and segregation and kinetochore formation during mitosis. This Homo sapiens (Human) protein is Kinetochore-associated protein DSN1 homolog (DSN1).